The primary structure comprises 1809 residues: Pyochelin synthetase PchF (1809 aa).

A condensation/cyclization region spans residues 69-490; it reads FPLTPVQAAY…GLLRRLAQSP (422 aa). Residues 520-915 are adenylation; it reads FAERALLTPD…GREDDQVKIR (396 aa). The 82-residue stretch at 1407 to 1488 folds into the Carrier domain; sequence APADELESAL…GLAERLRSAP (82 aa). An O-(pantetheine 4'-phosphoryl)serine modification is found at Ser1442. Residues 1584-1797 are thioesterase; sequence LGRRYAEALH…FDCLGEALAQ (214 aa).

The protein belongs to the NRP synthetase family. Pantetheine 4'-phosphate is required as a cofactor.

It carries out the reaction holo-[peptidyl-carrier protein] + L-cysteine + ATP = L-cysteinyl-[peptidyl-carrier protein] + AMP + diphosphate. It participates in siderophore biosynthesis. Functionally, involved in the biosynthesis of the siderophore pyochelin. Adenylates L-cysteine and loads it onto its peptidyl carrier domain via a thioester linkage to the phosphopanthetheine moiety. Then forms a peptide bond between the salicyl-thiazolinyl intermediate bound to the second carrier domain of PchE and the cysteine bound to its own peptidyl carrier domain to form the salicyl-thiazolinyl-cysteinyl-S-PCP2 intermediate. It subsequently cyclizes the C-terminal cysteine to form the second thiazoline heterocycle in the salicyl-thiazolinyl-thiazolinyl-S-PCP2 intermediate. When this intermediate is released by the action of a thioesterase, it produces the tricyclic acid hydroxyphenyl-thiazolyl-thiazolinyl-carboxylic acid (HPTT-COOH), an advanced intermediate containing the aryl-4,2-bis-heterocyclic skeleton of the bithiazoline class of siderophores. In Pseudomonas aeruginosa (strain UCBPP-PA14), this protein is Pyochelin synthetase PchF.